The sequence spans 136 residues: Large-conductance mechanosensitive channel (136 aa).

2 helical membrane-spanning segments follow: residues 9 to 29 (AFASRGNVIDMAVGIIIGAAF) and 79 to 99 (IQTIIDFTIIAFAIFMGLKAI).

It belongs to the MscL family. Homopentamer.

The protein resides in the cell inner membrane. Channel that opens in response to stretch forces in the membrane lipid bilayer. May participate in the regulation of osmotic pressure changes within the cell. This is Large-conductance mechanosensitive channel from Shewanella sp. (strain ANA-3).